We begin with the raw amino-acid sequence, 387 residues long: Deoxyguanosinetriphosphate triphosphohydrolase-like protein (387 aa).

The tract at residues 1 to 26 (MTAPYASDPQRARGRRVKEEESTFRS) is disordered. The segment covering 17–26 (VKEEESTFRS) has biased composition (basic and acidic residues). The 137-residue stretch at 62 to 198 (RLTHSIEVAQ…AAIADDVAYN (137 aa)) folds into the HD domain.

The protein belongs to the dGTPase family. Type 2 subfamily.

This is Deoxyguanosinetriphosphate triphosphohydrolase-like protein from Roseobacter denitrificans (strain ATCC 33942 / OCh 114) (Erythrobacter sp. (strain OCh 114)).